A 199-amino-acid polypeptide reads, in one-letter code: Superoxide dismutase [Mn/Fe] (199 aa).

Positions 27, 81, 161, and 165 each coordinate Fe(3+). His-27, His-81, Asp-161, and His-165 together coordinate Mn(2+).

Belongs to the iron/manganese superoxide dismutase family. In terms of assembly, homodimer. Mn(2+) is required as a cofactor. The cofactor is Fe(3+).

It catalyses the reaction 2 superoxide + 2 H(+) = H2O2 + O2. Functionally, destroys superoxide anion radicals which are normally produced within the cells and which are toxic to biological systems. Catalyzes the dismutation of superoxide anion radicals into O2 and H2O2 by successive reduction and oxidation of the transition metal ion at the active site. The polypeptide is Superoxide dismutase [Mn/Fe] (sodA) (Staphylococcus epidermidis (strain ATCC 35984 / DSM 28319 / BCRC 17069 / CCUG 31568 / BM 3577 / RP62A)).